The sequence spans 485 residues: Expansin-like protein 8 (485 aa).

An N-terminal signal peptide occupies residues 1-21 (MRISIILLSLLFLSLHSLIKA). Topologically, residues 22-464 (DITKLSVCGS…QSGHHASSNT (443 aa)) are extracellular. Residues 26-139 (LSVCGSARAV…QIVSCGYSGN (114 aa)) enclose the Expansin-like EG45 domain. 2 disulfide bridges follow: Cys29-Cys70 and Cys73-Cys134. Residues Asn117 and Asn365 are each glycosylated (N-linked (GlcNAc...) asparagine). The tract at residues 408–436 (EVNNKPSTTSGTGTTSSKPSSSSGGVSGG) is disordered. Over residues 414–431 (STTSGTGTTSSKPSSSSG) the composition is skewed to low complexity. Asn454 is a glycosylation site (N-linked (GlcNAc...) asparagine). Residues 465–485 (NILLPTTFVFFISITILSLLF) traverse the membrane as a helical segment.

The protein belongs to the expansin family. Expansin A subfamily.

The protein resides in the membrane. Functionally, may serve to lubricate the movement of the cellulose microfibrils during cell growth and wall extension and/or may serve to maintain the fluid state of the slug cell wall. This chain is Expansin-like protein 8 (expl8), found in Dictyostelium discoideum (Social amoeba).